The primary structure comprises 248 residues: Ribosomal RNA small subunit methyltransferase J (248 aa).

Residues 101 to 102, 117 to 118, 153 to 154, and D171 each bind S-adenosyl-L-methionine; these read RD, ER, and SS.

The protein belongs to the methyltransferase superfamily. RsmJ family.

The protein localises to the cytoplasm. The catalysed reaction is guanosine(1516) in 16S rRNA + S-adenosyl-L-methionine = N(2)-methylguanosine(1516) in 16S rRNA + S-adenosyl-L-homocysteine + H(+). In terms of biological role, specifically methylates the guanosine in position 1516 of 16S rRNA. This Pectobacterium atrosepticum (strain SCRI 1043 / ATCC BAA-672) (Erwinia carotovora subsp. atroseptica) protein is Ribosomal RNA small subunit methyltransferase J.